Consider the following 583-residue polypeptide: Ankyrin repeat and SOCS box protein 15 (583 aa).

ANK repeat units follow at residues 75–104 (KGWF…KTLW), 110–139 (DGET…WPNT), 143–172 (KGET…SLDQ), 176–205 (KRWS…NVHL), 209–238 (FGVT…DVFA), 242–271 (DGAS…SGNV), 275–304 (AGHL…KHAI), 307–336 (SGLT…DVNA), 349–378 (ERKT…DPNL), 379–408 (DPLN…NVNC), and 416–444 (TRFP…QVEL). One can recognise an SOCS box domain in the interval 524–579 (WPEIRQIIENPCSLKHLCRLKIRRVMGLQRLCQPASIQMLPLPAAMRRYLLFKEFD).

The protein belongs to the ankyrin SOCS box (ASB) family.

Its pathway is protein modification; protein ubiquitination. May be a substrate-recognition component of a SCF-like ECS (Elongin-Cullin-SOCS-box protein) E3 ubiquitin-protein ligase complex which mediates the ubiquitination and subsequent proteasomal degradation of target proteins. This Mus musculus (Mouse) protein is Ankyrin repeat and SOCS box protein 15 (Asb15).